Here is a 331-residue protein sequence, read N- to C-terminus: Ketol-acid reductoisomerase (NADP(+)) (331 aa).

The region spanning 2 to 182 is the KARI N-terminal Rossmann domain; that stretch reads AKMYYDKDAD…GGTRAGVIET (181 aa). Residues 25–28, Ser-51, Ser-53, and 83–86 each bind NADP(+); these read FGSQ and DEKQ. The active site involves His-108. Residue Gly-134 coordinates NADP(+). One can recognise a KARI C-terminal knotted domain in the interval 183 to 328; sequence TFKEETETDL…KGLREMMAWI (146 aa). Mg(2+) contacts are provided by Asp-191, Glu-195, Glu-227, and Glu-231. Ser-252 contacts substrate.

It belongs to the ketol-acid reductoisomerase family. Mg(2+) serves as cofactor.

It catalyses the reaction (2R)-2,3-dihydroxy-3-methylbutanoate + NADP(+) = (2S)-2-acetolactate + NADPH + H(+). It carries out the reaction (2R,3R)-2,3-dihydroxy-3-methylpentanoate + NADP(+) = (S)-2-ethyl-2-hydroxy-3-oxobutanoate + NADPH + H(+). The protein operates within amino-acid biosynthesis; L-isoleucine biosynthesis; L-isoleucine from 2-oxobutanoate: step 2/4. It functions in the pathway amino-acid biosynthesis; L-valine biosynthesis; L-valine from pyruvate: step 2/4. Its function is as follows. Involved in the biosynthesis of branched-chain amino acids (BCAA). Catalyzes an alkyl-migration followed by a ketol-acid reduction of (S)-2-acetolactate (S2AL) to yield (R)-2,3-dihydroxy-isovalerate. In the isomerase reaction, S2AL is rearranged via a Mg-dependent methyl migration to produce 3-hydroxy-3-methyl-2-ketobutyrate (HMKB). In the reductase reaction, this 2-ketoacid undergoes a metal-dependent reduction by NADPH to yield (R)-2,3-dihydroxy-isovalerate. The protein is Ketol-acid reductoisomerase (NADP(+)) of Thermoanaerobacter sp. (strain X514).